Consider the following 282-residue polypeptide: Orotidine 5'-phosphate decarboxylase (282 aa).

The active-site Proton donor is K95.

Belongs to the OMP decarboxylase family. Type 2 subfamily.

It carries out the reaction orotidine 5'-phosphate + H(+) = UMP + CO2. It functions in the pathway pyrimidine metabolism; UMP biosynthesis via de novo pathway; UMP from orotate: step 2/2. The sequence is that of Orotidine 5'-phosphate decarboxylase (pyrF) from Mycobacterium leprae (strain TN).